The following is a 267-amino-acid chain: Movement protein (267 aa).

This sequence belongs to the tobamovirus movement protein family.

The protein localises to the host cytoplasm. Its subcellular location is the host cytoskeleton. The protein resides in the host cell junction. It is found in the host plasmodesma. Functionally, transports viral genome to neighboring plant cells directly through plasmosdesmata, without any budding. The movement protein allows efficient cell to cell propagation, by bypassing the host cell wall barrier. Forms a ribonucleoprotein complex with viral RNA. Binds microtubules and modulates microtubule stability. Can bind double-stranded DNA. The chain is Movement protein (MP) from Brassicaceae (TVCV).